The following is a 219-amino-acid chain: Carbonic anhydrase 1 (219 aa).

Positions 39, 41, 98, and 101 each coordinate Zn(2+).

This sequence belongs to the beta-class carbonic anhydrase family. As to quaternary structure, oligomer. Zn(2+) serves as cofactor.

The enzyme catalyses hydrogencarbonate + H(+) = CO2 + H2O. In terms of biological role, reversible hydration of carbon dioxide. Carbon dioxide formed in the bicarbonate-dependent decomposition of cyanate by cyanase (CynS) diffuses out of the cell faster than it would be hydrated to bicarbonate, so the apparent function of this enzyme is to catalyze the hydration of carbon dioxide and thus prevent depletion of cellular bicarbonate. The sequence is that of Carbonic anhydrase 1 (cynT) from Escherichia coli O157:H7.